Here is a 448-residue protein sequence, read N- to C-terminus: Probable glycine dehydrogenase (decarboxylating) subunit 1 (448 aa).

It belongs to the GcvP family. N-terminal subunit subfamily. In terms of assembly, the glycine cleavage system is composed of four proteins: P, T, L and H. In this organism, the P 'protein' is a heterodimer of two subunits.

It carries out the reaction N(6)-[(R)-lipoyl]-L-lysyl-[glycine-cleavage complex H protein] + glycine + H(+) = N(6)-[(R)-S(8)-aminomethyldihydrolipoyl]-L-lysyl-[glycine-cleavage complex H protein] + CO2. In terms of biological role, the glycine cleavage system catalyzes the degradation of glycine. The P protein binds the alpha-amino group of glycine through its pyridoxal phosphate cofactor; CO(2) is released and the remaining methylamine moiety is then transferred to the lipoamide cofactor of the H protein. The protein is Probable glycine dehydrogenase (decarboxylating) subunit 1 of Caulobacter vibrioides (strain ATCC 19089 / CIP 103742 / CB 15) (Caulobacter crescentus).